The sequence spans 87 residues: Small ribosomal subunit protein uS17 (87 aa).

It belongs to the universal ribosomal protein uS17 family. In terms of assembly, part of the 30S ribosomal subunit.

In terms of biological role, one of the primary rRNA binding proteins, it binds specifically to the 5'-end of 16S ribosomal RNA. The chain is Small ribosomal subunit protein uS17 from Onion yellows phytoplasma (strain OY-M).